A 300-amino-acid polypeptide reads, in one-letter code: uncharacterized protein (300 aa).

Solcar repeat units lie at residues 10 to 101 (ESQT…VKDF), 119 to 199 (GKAI…AKEY), and 212 to 294 (FQNF…LIPF). A run of 6 helical transmembrane segments spans residues 16 to 36 (IVGSASAGILELSLFHPVDTI), 70 to 86 (ATSLFPGLGYAACYKIV), 121 to 141 (AIMHATAGSIVGIGEIFLLPL), 178 to 198 (TAARNAPGSFALFGGNAFAKE), 215 to 235 (FFTSIAGASASLIVSAPLDVI), and 275 to 295 (LTTGPKLVFSFTMAQTLIPFF).

This sequence belongs to the mitochondrial carrier (TC 2.A.29) family.

It is found in the mitochondrion inner membrane. This is an uncharacterized protein from Schizosaccharomyces pombe (strain 972 / ATCC 24843) (Fission yeast).